A 198-amino-acid chain; its full sequence is Large ribosomal subunit protein bL25 (198 aa).

This sequence belongs to the bacterial ribosomal protein bL25 family. CTC subfamily. Part of the 50S ribosomal subunit; part of the 5S rRNA/L5/L18/L25 subcomplex. Contacts the 5S rRNA. Binds to the 5S rRNA independently of L5 and L18.

In terms of biological role, this is one of the proteins that binds to the 5S RNA in the ribosome where it forms part of the central protuberance. This chain is Large ribosomal subunit protein bL25, found in Streptomyces coelicolor (strain ATCC BAA-471 / A3(2) / M145).